Here is a 121-residue protein sequence, read N- to C-terminus: UPF0102 protein Strop_1320 (121 aa).

This sequence belongs to the UPF0102 family.

The protein is UPF0102 protein Strop_1320 of Salinispora tropica (strain ATCC BAA-916 / DSM 44818 / JCM 13857 / NBRC 105044 / CNB-440).